Here is a 271-residue protein sequence, read N- to C-terminus: 4-hydroxy-tetrahydrodipicolinate reductase (271 aa).

Residues 12-17 (GGSGRM) and E38 contribute to the NAD(+) site. R39 provides a ligand contact to NADP(+). Residues 102-104 (GTT) and 126-129 (APNM) contribute to the NAD(+) site. H159 acts as the Proton donor/acceptor in catalysis. Position 160 (H160) interacts with (S)-2,3,4,5-tetrahydrodipicolinate. K163 functions as the Proton donor in the catalytic mechanism. A (S)-2,3,4,5-tetrahydrodipicolinate-binding site is contributed by 169-170 (GT).

It belongs to the DapB family.

Its subcellular location is the cytoplasm. It carries out the reaction (S)-2,3,4,5-tetrahydrodipicolinate + NAD(+) + H2O = (2S,4S)-4-hydroxy-2,3,4,5-tetrahydrodipicolinate + NADH + H(+). The catalysed reaction is (S)-2,3,4,5-tetrahydrodipicolinate + NADP(+) + H2O = (2S,4S)-4-hydroxy-2,3,4,5-tetrahydrodipicolinate + NADPH + H(+). It participates in amino-acid biosynthesis; L-lysine biosynthesis via DAP pathway; (S)-tetrahydrodipicolinate from L-aspartate: step 4/4. Its function is as follows. Catalyzes the conversion of 4-hydroxy-tetrahydrodipicolinate (HTPA) to tetrahydrodipicolinate. The protein is 4-hydroxy-tetrahydrodipicolinate reductase of Shewanella sediminis (strain HAW-EB3).